Here is a 379-residue protein sequence, read N- to C-terminus: MSQNASVGIVMPQKIPFEMPLVLENGKTLPRFDLMIETYGELNAEKNNAVLICHALSGNHHVAGRHSAEDKYTGWWDNMVGPGKPIDTERFFVVGLNNLGGCDGSSGPLSINPETGREYGADFPVVTVKDWVKSQAALADYLGIEQWAAIVGGSLGGMQALQWTISYPERVRHALVIASAPKLSTQNIAFNDVARQAILTDPDFNEGHYRSHNTVPARGLRIARMMGHITYLAEDGLGKKFGRDLRSNGYQYGFGVEFEVESYLRYQGDKFVGRFDANTYLLMTKALDYFDPAADFGDSLTRALQNVKAKFFVASFSTDWRFAPERSHELVKALIAAQKSVQYIEVKSAHGHDAFLMEDEAYMRAVAAYMNNVYKECQQ.

The 310-residue stretch at 48–357 (NAVLICHALS…SAHGHDAFLM (310 aa)) folds into the AB hydrolase-1 domain. The active-site Nucleophile is the S154. R224 contributes to the substrate binding site. Active-site residues include D319 and H352. Substrate is bound at residue D353.

This sequence belongs to the AB hydrolase superfamily. MetX family. In terms of assembly, homodimer.

It localises to the cytoplasm. The catalysed reaction is L-homoserine + succinyl-CoA = O-succinyl-L-homoserine + CoA. It participates in amino-acid biosynthesis; L-methionine biosynthesis via de novo pathway; O-succinyl-L-homoserine from L-homoserine: step 1/1. Its function is as follows. Transfers a succinyl group from succinyl-CoA to L-homoserine, forming succinyl-L-homoserine. The polypeptide is Homoserine O-succinyltransferase (Neisseria meningitidis serogroup B (strain ATCC BAA-335 / MC58)).